The following is a 128-amino-acid chain: Fluoride-specific ion channel FluC (128 aa).

Helical transmembrane passes span 2-22 (FYSI…RWCL), 35-55 (LGTL…AVVF), 67-87 (LFVI…SVEV), and 96-116 (FGWA…LTAL). Positions 75 and 78 each coordinate Na(+).

The protein belongs to the fluoride channel Fluc/FEX (TC 1.A.43) family.

The protein localises to the cell inner membrane. The catalysed reaction is fluoride(in) = fluoride(out). Na(+) is not transported, but it plays an essential structural role and its presence is essential for fluoride channel function. In terms of biological role, fluoride-specific ion channel. Important for reducing fluoride concentration in the cell, thus reducing its toxicity. The polypeptide is Fluoride-specific ion channel FluC (Burkholderia cenocepacia (strain ATCC BAA-245 / DSM 16553 / LMG 16656 / NCTC 13227 / J2315 / CF5610) (Burkholderia cepacia (strain J2315))).